Reading from the N-terminus, the 176-residue chain is HTH-type transcriptional regulator DctR (176 aa).

Positions 109–174 (VPEAAVSLSR…ELVRHQHIDY (66 aa)) constitute an HTH luxR-type domain. Residues 133-152 (TEDILEKLKISLKTFYCHKH) constitute a DNA-binding region (H-T-H motif).

Its function is as follows. May act as a transcriptional regulator of dctA. In Escherichia coli (strain K12), this protein is HTH-type transcriptional regulator DctR (dctR).